The sequence spans 551 residues: MLEFAVSAPFDPAADISAGIIPAQFPWLSLSILFPIVGSLMVPFIPDQGDGRQVRWFALGIALTTFLITVAAYLNGYDPSFSGLQLSERVSWLPNLGLTWAVGADGLSMPLILLTSFITTLAVLAAWPVTFKPKLFFFLMLAMDGGQIAVFAVQDMLLFFLAWELELLPVYLLLAIWGGKKRQYAATKFILYTAGSSLFILLAALAMGFMGGGTPNFEYAVLAQKGFSTSFQLLCYAGLLIAFGVKLPIVPLHTWLPDAHGEATAPVHMLLAGILLKMGGYALMRFNAEMLPDAHAQFAPLLVVLGVVNIIYAALTSFAQRNLKRKIAYSSISHMGFVLIGIGSFSALGTSGAMLQMISHGLIGASLFFLVGATYDRTHTLQLDEMGGVGQKMRIMFALWTVCSLASLALPGMSGFVSELMVFTGFATDEAYTLTFRIVIDGLAAVGVILTPIYLLSMLREIFFGKENVQLASNTNLVDAEPREVYIIGCLLVPIIGIGLYPRLMTDSYRTAIEALVDRDVAAMETISRPTAPLIRNPSLAPALLQAPKLP.

14 helical membrane passes run 25–45 (FPWL…VPFI), 56–76 (WFAL…YLNG), 111–131 (LILL…PVTF), 133–153 (PKLF…VFAV), 157–177 (LLFF…LAIW), 189–209 (FILY…AMGF), 233–253 (LLCY…VPLH), 264–284 (TAPV…YALM), 298–318 (FAPL…LTSF), 335–355 (MGFV…GAML), 356–376 (QMIS…ATYD), 397–417 (FALW…SGFV), 438–458 (IVID…LLSM), and 485–505 (VYII…PRLM).

The protein belongs to the complex I subunit 4 family.

Its subcellular location is the cellular thylakoid membrane. The enzyme catalyses a plastoquinone + NADH + (n+1) H(+)(in) = a plastoquinol + NAD(+) + n H(+)(out). It catalyses the reaction a plastoquinone + NADPH + (n+1) H(+)(in) = a plastoquinol + NADP(+) + n H(+)(out). Its function is as follows. NDH-1 shuttles electrons from NAD(P)H, via FMN and iron-sulfur (Fe-S) centers, to quinones in the respiratory chain. The immediate electron acceptor for the enzyme in this species is believed to be plastoquinone. Couples the redox reaction to proton translocation (for every two electrons transferred, four hydrogen ions are translocated across the cytoplasmic membrane), and thus conserves the redox energy in a proton gradient. The protein is NAD(P)H-quinone oxidoreductase chain 4 of Synechococcus sp. (strain WH7803).